We begin with the raw amino-acid sequence, 338 residues long: Large ribosomal subunit protein uL3 (338 aa).

The disordered stretch occupies residues Met-1–Pro-37.

The protein belongs to the universal ribosomal protein uL3 family. Part of the 50S ribosomal subunit. Forms a cluster with proteins L14 and L24e.

Functionally, one of the primary rRNA binding proteins, it binds directly near the 3'-end of the 23S rRNA, where it nucleates assembly of the 50S subunit. The protein is Large ribosomal subunit protein uL3 of Haloquadratum walsbyi (strain DSM 16790 / HBSQ001).